Here is a 546-residue protein sequence, read N- to C-terminus: Pyrophosphate--fructose 6-phosphate 1-phosphotransferase (546 aa).

A diphosphate-binding site is contributed by Gly80. A Mg(2+)-binding site is contributed by Asp174. Residues 202 to 204 (TID), 241 to 242 (KY), 249 to 251 (MGR), Glu310, and 420 to 423 (YEGR) contribute to the substrate site. Catalysis depends on Asp204, which acts as the Proton acceptor.

Belongs to the phosphofructokinase type A (PFKA) family. PPi-dependent PFK group II subfamily. Clade 'Long' sub-subfamily. Homodimer. The cofactor is Mg(2+). Mn(2+) is required as a cofactor.

It is found in the cytoplasm. The catalysed reaction is beta-D-fructose 6-phosphate + diphosphate = beta-D-fructose 1,6-bisphosphate + phosphate + H(+). The protein operates within carbohydrate degradation; glycolysis; D-glyceraldehyde 3-phosphate and glycerone phosphate from D-glucose: step 3/4. Its activity is regulated as follows. Non-allosteric. Competitively inhibited by PPi, Pi and fructose 1,6-bisphosphate. Its function is as follows. Catalyzes the phosphorylation of D-fructose 6-phosphate, the first committing step of glycolysis. Uses inorganic phosphate (PPi) as phosphoryl donor instead of ATP like common ATP-dependent phosphofructokinases (ATP-PFKs), which renders the reaction reversible, and can thus function both in glycolysis and gluconeogenesis. Consistently, PPi-PFK can replace the enzymes of both the forward (ATP-PFK) and reverse (fructose-bisphosphatase (FBPase)) reactions. This Entamoeba histolytica (strain ATCC 30459 / HM-1:IMSS / ABRM) protein is Pyrophosphate--fructose 6-phosphate 1-phosphotransferase.